The sequence spans 277 residues: Phosphatidylglycerol--prolipoprotein diacylglyceryl transferase (277 aa).

7 helical membrane passes run 21–41, 60–80, 95–115, 124–144, 176–196, 203–223, and 239–259; these read LAVR…LWLA, LLFA…VLFY, VWTG…AMLW, FFTI…AGRL, SQLY…NWFI, GTVS…VEYV, and MGQI…LWAF. Residue arginine 143 coordinates a 1,2-diacyl-sn-glycero-3-phospho-(1'-sn-glycerol).

Belongs to the Lgt family.

The protein localises to the cell inner membrane. The catalysed reaction is L-cysteinyl-[prolipoprotein] + a 1,2-diacyl-sn-glycero-3-phospho-(1'-sn-glycerol) = an S-1,2-diacyl-sn-glyceryl-L-cysteinyl-[prolipoprotein] + sn-glycerol 1-phosphate + H(+). It functions in the pathway protein modification; lipoprotein biosynthesis (diacylglyceryl transfer). In terms of biological role, catalyzes the transfer of the diacylglyceryl group from phosphatidylglycerol to the sulfhydryl group of the N-terminal cysteine of a prolipoprotein, the first step in the formation of mature lipoproteins. In Aliivibrio fischeri (strain ATCC 700601 / ES114) (Vibrio fischeri), this protein is Phosphatidylglycerol--prolipoprotein diacylglyceryl transferase.